A 394-amino-acid chain; its full sequence is GPI mannosyltransferase 2 (394 aa).

9 consecutive transmembrane segments (helical) span residues 2-22 (LWKL…IIYF), 47-67 (YYNV…SVYF), 104-124 (LTSI…LYYL), 132-152 (FGLV…LTGN), 185-205 (SITN…NFTV), 232-252 (IILS…TNIY), 293-313 (IPNF…LGYM), 323-343 (LLPL…FWNI), and 371-391 (YAIG…AAFL).

The protein belongs to the PIGV family.

It localises to the endoplasmic reticulum membrane. It participates in glycolipid biosynthesis; glycosylphosphatidylinositol-anchor biosynthesis. Its function is as follows. Mannosyltransferase involved in glycosylphosphatidylinositol-anchor biosynthesis. Transfers the second mannose to the glycosylphosphatidylinositol during GPI precursor assembly. This chain is GPI mannosyltransferase 2 (GPI18), found in Candida albicans (strain SC5314 / ATCC MYA-2876) (Yeast).